A 991-amino-acid polypeptide reads, in one-letter code: Collagenase ColT (991 aa).

The N-terminal stretch at 1–28 (MKKKFIKMLCSIAIGCMISTSYSIKVSA) is a signal peptide. Residues 29–52 (FSNGNTKTNPNGEFKSLSLNSTNP) constitute a propeptide that is removed on maturation. The interval 53–727 (YKTKYSFNDL…VYDIVFHGLL (675 aa)) is S1 metalloprotease domain, degrades FALGPA (furylacryloyl-Leu-Gly-Pro-Ala). The tract at residues 57–330 (YSFNDLNKLS…AIEAIKEDFN (274 aa)) is activator domain. The tract at residues 340 to 611 (DINKLIEEGK…MENLVNNYDN (272 aa)) is catalytic subdomain. A Ca(2+)-binding site is contributed by Glu-440. His-465 is a binding site for Zn(2+). Glu-466 is a catalytic residue. His-469 serves as a coordination point for Zn(2+). Residues Gly-473, Ile-477, and Gly-479 each contribute to the Ca(2+) site. Glu-499 is a Zn(2+) binding site. A helper subdomain region spans residues 619-731 (DDYMKQYDNK…VFHGLLSHNK (113 aa)). 2 collagen-binding domain regions span residues 755–870 (IYEK…NISD) and 878–991 (IKKI…VIIN). Ca(2+) is bound by residues Glu-757, Glu-759, Asn-761, Asp-784, Asp-787, Glu-883, Glu-885, Asn-887, Asp-888, Asp-910, and Asp-913.

Belongs to the peptidase M9B family. Collagenase subfamily. The cofactor is Ca(2+). It depends on Zn(2+) as a cofactor.

Its subcellular location is the secreted. It catalyses the reaction Digestion of native collagen in the triple helical region at Xaa-|-Gly bonds. With synthetic peptides, a preference is shown for Gly at P3 and P1', Pro and Ala at P2 and P2', and hydroxyproline, Ala or Arg at P3'.. Partially inhibited by 1-10-phenanthroline; inactivation is irreversible. Partially inhibited by EDTA; inactivation is reversible. Inhibited by broad-spectrum zinc metalloprotease inhibitor batimastat. N-aryl mercaptoacetamide-based inhibitors have been isolated that act on clostridial collagenases with submicromolar affinity while having negligibile activity on human collagenases. Its function is as follows. Clostridial collagenases are among the most efficient degraders of eukaryotic collagen known; saprophytes use collagen as a carbon source while pathogens additionally digest collagen to aid in host colonization. Has both tripeptidylcarboxypeptidase on Gly-X-Y and endopeptidase activities; the endopeptidase cuts within the triple helix region of collagen while tripeptidylcarboxypeptidase successively digests the exposed ends, thus clostridial collagenases can digest large sections of collagen. The activator domain (residues 57-330) and catalytic subdomain (340-611) open and close around substrate allowing digestion when the protein is closed. The protein is Collagenase ColT of Clostridium tetani (strain Massachusetts / E88).